A 1148-amino-acid polypeptide reads, in one-letter code: Protein pianissimo A (1148 aa).

Low complexity predominate over residues 1–34 (MTSSDSSVNTTSSSFGNISISSPNHSSSTPPLNN). Residues 1 to 41 (MTSSDSSVNTTSSSFGNISISSPNHSSSTPPLNNGNGNNVS) form a disordered region. The N-terminal Ras-GEF domain occupies 803 to 914 (KVSALSLNVL…STSGVYLPPH (112 aa)).

The protein belongs to the RICTOR family. In terms of assembly, part of a complex, TORC2, consisting of tor, lst8, piaA and ripA. Additional proteins, such as 14-3-3 and heat-shock proteins, may also belong to the TORC2 complex.

The protein resides in the cytoplasm. Regulates cell growth, chemotaxis, signal relay and the actin cytoskeleton. Required for chemoattractant receptor and G protein-mediated activation of the 12 transmembrane domain adenylyl cyclase. Functions as a part of protein complex TORC2. TORC2, is presumed to be indirectly negatively modulated by rapamycin and regulates actin polarization. TORC2, but not TORC1, negatively regulates phagocytosis. This protein and dagA protein CRAC, a cytosolic regulator, are both essential for activation of the enzyme adenylyl cyclase. This protein and CRAC do not function redundantly. Both proteins are integral components of the adenylyl cyclase activation pathway. The chain is Protein pianissimo A (piaA) from Dictyostelium discoideum (Social amoeba).